We begin with the raw amino-acid sequence, 131 residues long: Leptin receptor gene-related protein (131 aa).

Helical transmembrane passes span 7–27, 32–52, 69–89, and 100–120; these read LVAL…GCAL, VYWP…HFIA, LAYF…VILA, and GLVL…FLVF.

Belongs to the OB-RGRP/VPS55 family. Interacts with LEPR. Interacts with RAB13.

The protein resides in the golgi apparatus membrane. It localises to the endosome membrane. Its function is as follows. Negatively regulates leptin receptor (LEPR) cell surface expression, and thus decreases response to leptin/LEP. Negatively regulates growth hormone (GH) receptor cell surface expression in liver. May play a role in liver resistance to GH during periods of reduced nutrient availability. The sequence is that of Leptin receptor gene-related protein (LEPROT) from Bos taurus (Bovine).